The sequence spans 513 residues: Na(+)/H(+) antiporter NhaB (513 aa).

Helical transmembrane passes span 23-43 (LALI…PFVA), 52-72 (IFTL…LLAI), 97-117 (LLLM…LFIF), 120-140 (LLLS…AAAF), 144-164 (FLDA…FYGI), 202-222 (LMMH…VGEP), 238-258 (FFLR…LTCL), 303-323 (AIIG…VGLI), 348-368 (TESL…AVII), 391-411 (LFYI…VGTI), 447-467 (ATPN…APLI), and 475-495 (VWMA…CVEF).

It belongs to the NhaB Na(+)/H(+) (TC 2.A.34) antiporter family.

Its subcellular location is the cell inner membrane. It carries out the reaction 2 Na(+)(in) + 3 H(+)(out) = 2 Na(+)(out) + 3 H(+)(in). Functionally, na(+)/H(+) antiporter that extrudes sodium in exchange for external protons. The protein is Na(+)/H(+) antiporter NhaB of Shigella flexneri serotype 5b (strain 8401).